A 374-amino-acid polypeptide reads, in one-letter code: Cell wall integrity and stress response component 1 (374 aa).

The signal sequence occupies residues 1-29; the sequence is MVFLNSSPFKGRLLFFVYLLIISTRLVAA. Residues 30-292 are Extracellular-facing; it reads DMNTQYGCYL…SNHTSLNAGA (263 aa). One can recognise a WSC domain in the interval 31 to 119; that stretch reads MNTQYGCYLV…DLYWSVYLTG (89 aa). A disordered region spans residues 132–236; that stretch reads VSSTTSSSSS…SSSSSSRPSS (105 aa). Residues asparagine 278 and asparagine 284 are each glycosylated (N-linked (GlcNAc...) asparagine). Residues 293 to 313 traverse the membrane as a helical segment; that stretch reads IVGIVIGCVAFAVVMALCIFL. Residues 314–374 are Cytoplasmic-facing; it reads YFYFRRFKIR…RKILRVTNLN (61 aa). A Phosphoserine modification is found at serine 354.

In terms of processing, O-mannosylated.

The protein resides in the membrane. This is Cell wall integrity and stress response component 1 (wsc1) from Schizosaccharomyces pombe (strain 972 / ATCC 24843) (Fission yeast).